Here is a 161-residue protein sequence, read N- to C-terminus: ATP synthase subunit b 1 (161 aa).

The chain crosses the membrane as a helical span at residues 3 to 23 (FDASFFALVGLVLFFVLIAYL).

The protein belongs to the ATPase B chain family. F-type ATPases have 2 components, F(1) - the catalytic core - and F(0) - the membrane proton channel. F(1) has five subunits: alpha(3), beta(3), gamma(1), delta(1), epsilon(1). F(0) has three main subunits: a(1), b(2) and c(10-14). The alpha and beta chains form an alternating ring which encloses part of the gamma chain. F(1) is attached to F(0) by a central stalk formed by the gamma and epsilon chains, while a peripheral stalk is formed by the delta and b chains.

It is found in the cell inner membrane. Functionally, f(1)F(0) ATP synthase produces ATP from ADP in the presence of a proton or sodium gradient. F-type ATPases consist of two structural domains, F(1) containing the extramembraneous catalytic core and F(0) containing the membrane proton channel, linked together by a central stalk and a peripheral stalk. During catalysis, ATP synthesis in the catalytic domain of F(1) is coupled via a rotary mechanism of the central stalk subunits to proton translocation. In terms of biological role, component of the F(0) channel, it forms part of the peripheral stalk, linking F(1) to F(0). The protein is ATP synthase subunit b 1 of Agrobacterium fabrum (strain C58 / ATCC 33970) (Agrobacterium tumefaciens (strain C58)).